The following is a 461-amino-acid chain: mRNA cap guanine-N(7) methyltransferase (461 aa).

The segment at 1–117 (MESSVKASVD…RKLQPQDALE (117 aa)) is disordered. Residues Ser11, Ser15, Ser16, and Ser58 each carry the phosphoserine modification. Composition is skewed to polar residues over residues 14 to 29 (ESSP…SGQR) and 49 to 58 (EQNSSYVQDS). A compositionally biased stretch (basic and acidic residues) spans 65 to 93 (LDVEIILDEKHSEDDGGASKRSKLERGGG). Phosphoserine occurs at positions 94 and 99. Positions 107 to 109 (KRK) match the Nuclear localization signal motif. An mRNA cap 0 methyltransferase domain is found at 152-460 (SRIFYLRNFN…IYLVFAFEKQ (309 aa)). 161-162 (NN) lines the mRNA pocket. S-adenosyl-L-methionine is bound by residues Lys165, Gly190, Asp212, Asp246, Gln269, and Tyr274.

Belongs to the class I-like SAM-binding methyltransferase superfamily. mRNA cap 0 methyltransferase family. As to quaternary structure, interacts with importin alpha, leading to stimulate both RNA-binding and methyltransferase activity. Interaction with importin alpha and beta is required for its nuclear localization, importin beta dissociating in response to RanGTP, allowing RNMT-importin alpha to bind RNA substrates. Interacts with elongating form of polymerase II and RNGTT. Interacts with RAMAC, this interaction significantly enhances RNA-binding and cap methyltransferase activity.

The protein resides in the nucleus. It catalyses the reaction a 5'-end (5'-triphosphoguanosine)-ribonucleoside in mRNA + S-adenosyl-L-methionine = a 5'-end (N(7)-methyl 5'-triphosphoguanosine)-ribonucleoside in mRNA + S-adenosyl-L-homocysteine. With respect to regulation, methyltransferase activity is activated by RAMAC. Catalytic subunit of the mRNA-capping methyltransferase RNMT:RAMAC complex that methylates the N7 position of the added guanosine to the 5'-cap structure of mRNAs. Binds RNA containing 5'-terminal GpppC. The chain is mRNA cap guanine-N(7) methyltransferase (Rnmt) from Rattus norvegicus (Rat).